Consider the following 368-residue polypeptide: Zinc finger protein 24 (368 aa).

Residue Lys22 forms a Glycyl lysine isopeptide (Lys-Gly) (interchain with G-Cter in SUMO2) linkage. Lys27 is covalently cross-linked (Glycyl lysine isopeptide (Lys-Gly) (interchain with G-Cter in SUMO1); alternate). A Glycyl lysine isopeptide (Lys-Gly) (interchain with G-Cter in SUMO2); alternate cross-link involves residue Lys27. In terms of domain architecture, SCAN box spans 52-134 (RQRFRQFGYQ…TVLEDLESEL (83 aa)). Phosphoserine occurs at positions 132 and 142. Glycyl lysine isopeptide (Lys-Gly) (interchain with G-Cter in SUMO2) cross-links involve residues Lys147, Lys177, and Lys236. A C2H2-type 1 zinc finger spans residues 251 to 273 (HICDECGKHFSQGSALILHQRIH). A necessary and sufficient for nuclear localization region spans residues 251-301 (HICDECGKHFSQGSALILHQRIHSGEKPYGCVECGKAFSRSSILVQHQRVH). Position 274 is a phosphoserine (Ser274). Residues Lys277 and Lys286 each participate in a glycyl lysine isopeptide (Lys-Gly) (interchain with G-Cter in SUMO2) cross-link. 3 C2H2-type zinc fingers span residues 279-301 (YGCV…QRVH), 307-329 (YKCL…QRIH), and 335-357 (YECV…QRRH). Ser292 carries the phosphoserine modification. At Tyr335 the chain carries Phosphotyrosine. Residues Lys361 and Lys367 each participate in a glycyl lysine isopeptide (Lys-Gly) (interchain with G-Cter in SUMO2) cross-link.

This sequence belongs to the krueppel C2H2-type zinc-finger protein family. Sumoylated. In terms of tissue distribution, expressed in many tissues except in heart.

The protein localises to the nucleus. In terms of biological role, transcription factor required for myelination of differentiated oligodendrocytes. Required for the conversion of oligodendrocytes from the premyelinating to the myelinating state. In the developing central nervous system (CNS), involved in the maintenance in the progenitor stage by promoting the cell cycle. Specifically binds to the 5'-TCAT-3' DNA sequence. Has transcription repressor activity in vitro. This Homo sapiens (Human) protein is Zinc finger protein 24 (ZNF24).